The following is a 369-amino-acid chain: Melanoma-associated antigen 10 (369 aa).

Residues 1–131 form a disordered region; it reads MPRAPKRQRC…VLPDSESLPR (131 aa). Positions 39–62 are enriched in low complexity; that stretch reads SSSTSTSSSFPSSFPSSSSSSSSS. Composition is skewed to polar residues over residues 85–96 and 107–121; these read QSAQIACSSPSV and EGSSSQKEESPSTLQ. Residues 134–333 enclose the MAGE domain; that stretch reads IDEKVTDLVQ…RSFPLWYEEA (200 aa). The interval 340-369 is disordered; it reads RAQDRIATTDDTTAMASASSSATGSFSYPE. A compositionally biased stretch (low complexity) spans 348–369; sequence TDDTTAMASASSSATGSFSYPE.

In terms of tissue distribution, expressed in many tumors of several types, such as melanoma, head and neck squamous cell carcinoma, lung carcinoma and breast carcinoma, but not in normal tissues except for spermatogonia, spermatocytes and placenta.

It is found in the nucleus. In terms of biological role, not known, though may play a role in embryonal development and tumor transformation or aspects of tumor progression. This is Melanoma-associated antigen 10 (MAGEA10) from Homo sapiens (Human).